The following is a 664-amino-acid chain: UvrABC system protein B (664 aa).

The Helicase ATP-binding domain maps to 24–182 (AGLRAGYRHQ…QLIDLQFERN (159 aa)). 37-44 (GATGTGKT) is a binding site for ATP. The Beta-hairpin signature appears at 90-113 (YYDEYTPEAYVPSKDLYIEKEASI). A Helicase C-terminal domain is found at 427-593 (QIDDLLGEIR…GIAKGVRDLT (167 aa)). One can recognise a UVR domain in the interval 624-659 (LKLIKDLEKQMKQAAKALAFEKAAALRDQIVELRQA).

It belongs to the UvrB family. In terms of assembly, forms a heterotetramer with UvrA during the search for lesions. Interacts with UvrC in an incision complex.

The protein localises to the cytoplasm. Functionally, the UvrABC repair system catalyzes the recognition and processing of DNA lesions. A damage recognition complex composed of 2 UvrA and 2 UvrB subunits scans DNA for abnormalities. Upon binding of the UvrA(2)B(2) complex to a putative damaged site, the DNA wraps around one UvrB monomer. DNA wrap is dependent on ATP binding by UvrB and probably causes local melting of the DNA helix, facilitating insertion of UvrB beta-hairpin between the DNA strands. Then UvrB probes one DNA strand for the presence of a lesion. If a lesion is found the UvrA subunits dissociate and the UvrB-DNA preincision complex is formed. This complex is subsequently bound by UvrC and the second UvrB is released. If no lesion is found, the DNA wraps around the other UvrB subunit that will check the other stand for damage. The protein is UvrABC system protein B of Chloroflexus aggregans (strain MD-66 / DSM 9485).